A 212-amino-acid chain; its full sequence is Leucine efflux protein (212 aa).

Transmembrane regions (helical) follow at residues 12–32 (TYLVGAIFIVLVPGPNTLFVL), 49–69 (GVFIGDAVLMFLAWAGVATLI), 71–91 (TTPILFNIVRYLGAFYLLYLG), 122–142 (ILSLTNPKAILFYVSFFVQFI), 153–173 (FFILATTLELVSFCYLSFLII), and 188–208 (LAKVGNSLIGLMFVGFAARLA).

It belongs to the Rht family.

The protein localises to the cell inner membrane. It catalyses the reaction L-leucine(in) + H(+)(out) = L-leucine(out) + H(+)(in). In terms of biological role, exporter of leucine. The sequence is that of Leucine efflux protein (leuE) from Escherichia coli O6:K15:H31 (strain 536 / UPEC).